The chain runs to 175 residues: Mitochondrial inner membrane protease subunit 2 (175 aa).

The chain crosses the membrane as a helical span at residues 19-37; the sequence is FFVAVPVAVTFLDRVACVA. Residues Ser-43 and Lys-91 contribute to the active site.

This sequence belongs to the peptidase S26 family. IMP2 subfamily. In terms of assembly, heterodimer of 2 subunits, IMMPL1 and IMMPL2. In terms of tissue distribution, expressed in all tissues tested except adult liver and lung.

The protein localises to the mitochondrion inner membrane. Its function is as follows. Catalyzes the removal of transit peptides required for the targeting of proteins from the mitochondrial matrix, across the inner membrane, into the inter-membrane space. Known to process the nuclear encoded protein DIABLO. The sequence is that of Mitochondrial inner membrane protease subunit 2 (IMMP2L) from Homo sapiens (Human).